Here is a 123-residue protein sequence, read N- to C-terminus: S-adenosylmethionine decarboxylase proenzyme 2 (123 aa).

Residue S65 is the Schiff-base intermediate with substrate; via pyruvic acid of the active site. S65 carries the post-translational modification Pyruvic acid (Ser); by autocatalysis. H70 acts as the Proton acceptor; for processing activity in catalysis. Residue C85 is the Proton donor; for catalytic activity of the active site.

The protein belongs to the prokaryotic AdoMetDC family. Type 1 subfamily. As to quaternary structure, heterotetramer of two alpha and two beta chains arranged as a dimer of alpha/beta heterodimers. Requires pyruvate as cofactor. In terms of processing, is synthesized initially as an inactive proenzyme. Formation of the active enzyme involves a self-maturation process in which the active site pyruvoyl group is generated from an internal serine residue via an autocatalytic post-translational modification. Two non-identical subunits are generated from the proenzyme in this reaction, and the pyruvate is formed at the N-terminus of the alpha chain, which is derived from the carboxyl end of the proenzyme. The post-translation cleavage follows an unusual pathway, termed non-hydrolytic serinolysis, in which the side chain hydroxyl group of the serine supplies its oxygen atom to form the C-terminus of the beta chain, while the remainder of the serine residue undergoes an oxidative deamination to produce ammonia and the pyruvoyl group blocking the N-terminus of the alpha chain.

It catalyses the reaction S-adenosyl-L-methionine + H(+) = S-adenosyl 3-(methylsulfanyl)propylamine + CO2. Its pathway is amine and polyamine biosynthesis; S-adenosylmethioninamine biosynthesis; S-adenosylmethioninamine from S-adenosyl-L-methionine: step 1/1. Its function is as follows. Catalyzes the decarboxylation of S-adenosylmethionine to S-adenosylmethioninamine (dcAdoMet), the propylamine donor required for the synthesis of the polyamines spermine and spermidine from the diamine putrescine. This Bacillus cereus (strain ZK / E33L) protein is S-adenosylmethionine decarboxylase proenzyme 2.